The following is a 119-amino-acid chain: Ribonuclease P protein component (119 aa).

Belongs to the RnpA family. In terms of assembly, consists of a catalytic RNA component (M1 or rnpB) and a protein subunit.

It catalyses the reaction Endonucleolytic cleavage of RNA, removing 5'-extranucleotides from tRNA precursor.. In terms of biological role, RNaseP catalyzes the removal of the 5'-leader sequence from pre-tRNA to produce the mature 5'-terminus. It can also cleave other RNA substrates such as 4.5S RNA. The protein component plays an auxiliary but essential role in vivo by binding to the 5'-leader sequence and broadening the substrate specificity of the ribozyme. The sequence is that of Ribonuclease P protein component from Proteus mirabilis (strain HI4320).